A 124-amino-acid chain; its full sequence is Glycine cleavage system H protein (124 aa).

The Lipoyl-binding domain maps to 22-104 (LVITGITDHA…YGKGWIYKIK (83 aa)). Lysine 63 is modified (N6-lipoyllysine).

Belongs to the GcvH family. As to quaternary structure, the glycine cleavage system is composed of four proteins: P, T, L and H. It depends on (R)-lipoate as a cofactor.

In terms of biological role, the glycine cleavage system catalyzes the degradation of glycine. The H protein shuttles the methylamine group of glycine from the P protein to the T protein. In Acinetobacter baumannii (strain ACICU), this protein is Glycine cleavage system H protein.